The following is a 31-amino-acid chain: Cytochrome b6-f complex subunit 6 (31 aa).

The chain crosses the membrane as a helical span at residues 4–24 (ITSYFGFLLAALTITSALFIG).

The protein belongs to the PetL family. In terms of assembly, the 4 large subunits of the cytochrome b6-f complex are cytochrome b6, subunit IV (17 kDa polypeptide, PetD), cytochrome f and the Rieske protein, while the 4 small subunits are PetG, PetL, PetM and PetN. The complex functions as a dimer.

Its subcellular location is the plastid. The protein resides in the chloroplast thylakoid membrane. In terms of biological role, component of the cytochrome b6-f complex, which mediates electron transfer between photosystem II (PSII) and photosystem I (PSI), cyclic electron flow around PSI, and state transitions. PetL is important for photoautotrophic growth as well as for electron transfer efficiency and stability of the cytochrome b6-f complex. The sequence is that of Cytochrome b6-f complex subunit 6 from Coffea arabica (Arabian coffee).